We begin with the raw amino-acid sequence, 526 residues long: Peptide chain release factor 3 (526 aa).

The tr-type G domain occupies 11–277; sequence SKRRTFAIIS…SLIKWAPSPL (267 aa). Residues 20-27, 88-92, and 142-145 contribute to the GTP site; these read SHPDAGKT, DTPGH, and NKLD.

It belongs to the TRAFAC class translation factor GTPase superfamily. Classic translation factor GTPase family. PrfC subfamily.

Its subcellular location is the cytoplasm. In terms of biological role, increases the formation of ribosomal termination complexes and stimulates activities of RF-1 and RF-2. It binds guanine nucleotides and has strong preference for UGA stop codons. It may interact directly with the ribosome. The stimulation of RF-1 and RF-2 is significantly reduced by GTP and GDP, but not by GMP. The polypeptide is Peptide chain release factor 3 (Buchnera aphidicola subsp. Acyrthosiphon pisum (strain 5A)).